The sequence spans 96 residues: Large ribosomal subunit protein uL23 (96 aa).

Belongs to the universal ribosomal protein uL23 family. In terms of assembly, part of the 50S ribosomal subunit. Contacts protein L29, and trigger factor when it is bound to the ribosome.

Functionally, one of the early assembly proteins it binds 23S rRNA. One of the proteins that surrounds the polypeptide exit tunnel on the outside of the ribosome. Forms the main docking site for trigger factor binding to the ribosome. The chain is Large ribosomal subunit protein uL23 from Bacillus cytotoxicus (strain DSM 22905 / CIP 110041 / 391-98 / NVH 391-98).